We begin with the raw amino-acid sequence, 61 residues long: Large ribosomal subunit protein eL24 (61 aa).

Positions 7, 10, 33, and 37 each coordinate Zn(2+). The C4-type zinc-finger motif lies at 7-37; the sequence is CSFCGKEIPPATGLMYIRNDGSILWFCSNKC.

Belongs to the eukaryotic ribosomal protein eL24 family. Part of the 50S ribosomal subunit. Forms a cluster with proteins L3 and L14. Zn(2+) serves as cofactor.

Functionally, binds to the 23S rRNA. In Sulfurisphaera tokodaii (strain DSM 16993 / JCM 10545 / NBRC 100140 / 7) (Sulfolobus tokodaii), this protein is Large ribosomal subunit protein eL24.